Here is a 259-residue protein sequence, read N- to C-terminus: Tryptophan synthase alpha chain (259 aa).

Catalysis depends on proton acceptor residues E35 and D46.

This sequence belongs to the TrpA family. Tetramer of two alpha and two beta chains.

It carries out the reaction (1S,2R)-1-C-(indol-3-yl)glycerol 3-phosphate + L-serine = D-glyceraldehyde 3-phosphate + L-tryptophan + H2O. Its pathway is amino-acid biosynthesis; L-tryptophan biosynthesis; L-tryptophan from chorismate: step 5/5. In terms of biological role, the alpha subunit is responsible for the aldol cleavage of indoleglycerol phosphate to indole and glyceraldehyde 3-phosphate. The sequence is that of Tryptophan synthase alpha chain from Methanococcus maripaludis (strain C5 / ATCC BAA-1333).